The chain runs to 140 residues: Putative pre-16S rRNA nuclease (140 aa).

It belongs to the YqgF nuclease family.

Its subcellular location is the cytoplasm. Functionally, could be a nuclease involved in processing of the 5'-end of pre-16S rRNA. This chain is Putative pre-16S rRNA nuclease, found in Vibrio cholerae serotype O1 (strain ATCC 39541 / Classical Ogawa 395 / O395).